A 306-amino-acid polypeptide reads, in one-letter code: MSAEKIKCSCCGKEQNANQYYISESPFNSATGKLSVCKSCLQNEFQKDKDNLKNVQNILRMIDRPFVYDLWVSAVNESESKKKSAGNVLGTYMKNIGMKDYKSKTWADSEFDFEEEQEYTTQLLLAKSTEDISKEDIDELMQFWGRGLDVEDYIWLQNEYIDFTNRYECDSKGMELLINEICLTRLDIRKRRENGEKVDQQQKTLQDLLGSSNLKPVQETGASGVEQESFGTLIKKYENERPIPEPEPRWKDPDKIGKYIKVFFLGHLSRMLGLKNQYSEEYWEEMNKHTVEEPVAEEEDRENDLT.

This is SPbeta prophage-derived uncharacterized protein YonG (yonG) from Bacillus subtilis (strain 168).